The primary structure comprises 856 residues: DNA mismatch repair protein MutS (856 aa).

618-625 provides a ligand contact to ATP; sequence GPNMGGKS.

Belongs to the DNA mismatch repair MutS family.

In terms of biological role, this protein is involved in the repair of mismatches in DNA. It is possible that it carries out the mismatch recognition step. This protein has a weak ATPase activity. The protein is DNA mismatch repair protein MutS of Shewanella baltica (strain OS223).